Reading from the N-terminus, the 261-residue chain is THO complex subunit THP2 (261 aa).

Component of the THO complex, which is composed of HPR1, MFT1, THO2 and THP2. Together with SUB2, TEX1 and YRA1, THO forms the transcription/export (TREX) complex. THO associates with DNA and RNA in vitro.

It localises to the nucleus. Component the THO subcomplex of the TREX complex, which operates in coupling transcription elongation to mRNA export. The THO complex is recruited to transcribed genes and moves along the gene with the elongating polymerase during transcription. THO is important for stabilizing nascent RNA in the RNA polymerase II elongation complex by preventing formation of DNA:RNA hybrids behind the elongating polymerase. It functions in cotranscriptional formation of an export-competent messenger ribonucleoprotein particle (mRNP) by facilitating the loading of ATP-dependent RNA helicase SUB2 and the mRNA export factor YRA1 along the nascent mRNA. This Saccharomyces cerevisiae (strain ATCC 204508 / S288c) (Baker's yeast) protein is THO complex subunit THP2 (THP2).